The primary structure comprises 175 residues: Cuticle protein CP1876 (175 aa).

In terms of tissue distribution, calcified shell.

This Cancer pagurus (Rock crab) protein is Cuticle protein CP1876.